The primary structure comprises 445 residues: Phosphoglucosamine mutase (445 aa).

Catalysis depends on S105, which acts as the Phosphoserine intermediate. Mg(2+) contacts are provided by S105, D244, D246, and D248. A Phosphoserine modification is found at S105.

The protein belongs to the phosphohexose mutase family. The cofactor is Mg(2+). In terms of processing, activated by phosphorylation.

It carries out the reaction alpha-D-glucosamine 1-phosphate = D-glucosamine 6-phosphate. Catalyzes the conversion of glucosamine-6-phosphate to glucosamine-1-phosphate. The chain is Phosphoglucosamine mutase from Janthinobacterium sp. (strain Marseille) (Minibacterium massiliensis).